The primary structure comprises 118 residues: Large ribosomal subunit protein bL20 (118 aa).

This sequence belongs to the bacterial ribosomal protein bL20 family.

Its function is as follows. Binds directly to 23S ribosomal RNA and is necessary for the in vitro assembly process of the 50S ribosomal subunit. It is not involved in the protein synthesizing functions of that subunit. This is Large ribosomal subunit protein bL20 (rplT) from Buchnera aphidicola subsp. Acyrthosiphon pisum (strain APS) (Acyrthosiphon pisum symbiotic bacterium).